Here is a 456-residue protein sequence, read N- to C-terminus: Methylenetetrahydrofolate--tRNA-(uracil-5-)-methyltransferase TrmFO (456 aa).

An FAD-binding site is contributed by 12 to 17; sequence GGGLAG.

This sequence belongs to the MnmG family. TrmFO subfamily. Requires FAD as cofactor.

The protein localises to the cytoplasm. The enzyme catalyses uridine(54) in tRNA + (6R)-5,10-methylene-5,6,7,8-tetrahydrofolate + NADH + H(+) = 5-methyluridine(54) in tRNA + (6S)-5,6,7,8-tetrahydrofolate + NAD(+). It carries out the reaction uridine(54) in tRNA + (6R)-5,10-methylene-5,6,7,8-tetrahydrofolate + NADPH + H(+) = 5-methyluridine(54) in tRNA + (6S)-5,6,7,8-tetrahydrofolate + NADP(+). Functionally, catalyzes the folate-dependent formation of 5-methyl-uridine at position 54 (M-5-U54) in all tRNAs. This Picosynechococcus sp. (strain ATCC 27264 / PCC 7002 / PR-6) (Agmenellum quadruplicatum) protein is Methylenetetrahydrofolate--tRNA-(uracil-5-)-methyltransferase TrmFO.